The chain runs to 344 residues: tRNA N6-adenosine threonylcarbamoyltransferase (344 aa).

H111 and H115 together coordinate Fe cation. Substrate contacts are provided by residues 134–138, D167, G180, and N277; that span reads LVSGG. Residue D305 coordinates Fe cation.

This sequence belongs to the KAE1 / TsaD family. Fe(2+) is required as a cofactor.

The protein localises to the cytoplasm. It carries out the reaction L-threonylcarbamoyladenylate + adenosine(37) in tRNA = N(6)-L-threonylcarbamoyladenosine(37) in tRNA + AMP + H(+). Functionally, required for the formation of a threonylcarbamoyl group on adenosine at position 37 (t(6)A37) in tRNAs that read codons beginning with adenine. Is involved in the transfer of the threonylcarbamoyl moiety of threonylcarbamoyl-AMP (TC-AMP) to the N6 group of A37, together with TsaE and TsaB. TsaD likely plays a direct catalytic role in this reaction. The polypeptide is tRNA N6-adenosine threonylcarbamoyltransferase (Glaesserella parasuis serovar 5 (strain SH0165) (Haemophilus parasuis)).